The sequence spans 274 residues: MIEIKKAKPTSPGRRHVVSVKNTELHTGKPFKGLVEVKKSKAGRNNTGRITVRHQGGGHKQHYRIVDFKRNKDDITAKVERIEYDPNRSANIALVLYADGERRYIVAPKGLKKDMSVISGEKVDIAVGNCMPLRNIPLGTVIHNIEMKPKKGAQMIRSAGTFAQLVGKDNAYAIIRLRSGEMRRVLLDCRAVIGVVSNSEHNLKSLGKAGAKRWRGIRPTVRGVAMNPVDHPHGGGEGRTSGGRHPVTPWGIPTKGYKTRRNKRSNKLIVQKRK.

Positions 224-274 (VAMNPVDHPHGGGEGRTSGGRHPVTPWGIPTKGYKTRRNKRSNKLIVQKRK) are disordered. Positions 257–274 (YKTRRNKRSNKLIVQKRK) are enriched in basic residues.

It belongs to the universal ribosomal protein uL2 family. Part of the 50S ribosomal subunit. Forms a bridge to the 30S subunit in the 70S ribosome.

One of the primary rRNA binding proteins. Required for association of the 30S and 50S subunits to form the 70S ribosome, for tRNA binding and peptide bond formation. It has been suggested to have peptidyltransferase activity; this is somewhat controversial. Makes several contacts with the 16S rRNA in the 70S ribosome. This chain is Large ribosomal subunit protein uL2, found in Francisella tularensis subsp. holarctica (strain FTNF002-00 / FTA).